Reading from the N-terminus, the 465-residue chain is Iron-sulfur cluster assembly SufBD family protein SH2035 (465 aa).

Belongs to the iron-sulfur cluster assembly SufBD family.

The chain is Iron-sulfur cluster assembly SufBD family protein SH2035 from Staphylococcus haemolyticus (strain JCSC1435).